We begin with the raw amino-acid sequence, 117 residues long: Large ribosomal subunit protein bL20 (117 aa).

It belongs to the bacterial ribosomal protein bL20 family.

In terms of biological role, binds directly to 23S ribosomal RNA and is necessary for the in vitro assembly process of the 50S ribosomal subunit. It is not involved in the protein synthesizing functions of that subunit. The chain is Large ribosomal subunit protein bL20 from Trichlorobacter lovleyi (strain ATCC BAA-1151 / DSM 17278 / SZ) (Geobacter lovleyi).